Here is a 185-residue protein sequence, read N- to C-terminus: Serine/arginine-rich splicing factor RSZ21A (185 aa).

Positions 2–73 (ARVYVGNLDP…WRVELSRNAS (72 aa)) constitute an RRM domain. A CCHC-type zinc finger spans residues 87–104 (SKCYECGETGHFARECRL). Residues 109-185 (GGLGSGRRRS…YDNGYRRSRS (77 aa)) form a disordered region. The span at 114–131 (GRRRSRSRSRSRSPRYRR) shows a compositional bias: basic residues. 2 stretches are compositionally biased toward low complexity: residues 132 to 145 (SPSYGRRSYSPAGR) and 152 to 163 (VSPARARSYSRS).

Belongs to the splicing factor SR family. Post-translationally, extensively phosphorylated on serine residues in the RS domain. In terms of tissue distribution, expressed in roots, leaves and immature seeds.

It localises to the nucleus. Functionally, involved in pre-mRNA splicing. The sequence is that of Serine/arginine-rich splicing factor RSZ21A (RSZ21A) from Oryza sativa subsp. japonica (Rice).